Reading from the N-terminus, the 437-residue chain is Aspartic proteinase nepenthesin-1 (437 aa).

The signal sequence occupies residues Met-1–Ser-24. Positions Thr-25–Leu-78 are cleaved as a propeptide — activation peptide. 2 N-linked (GlcNAc...) asparagine glycosylation sites follow: Asn-53 and Asn-98. A Peptidase A1 domain is found at Tyr-95–Ala-430. Asp-113 is a catalytic residue. Disulfide bonds link Cys-123–Cys-126, Cys-129–Cys-203, Cys-150–Cys-168, Cys-155–Cys-163, Cys-240–Cys-434, and Cys-354–Cys-395. An N-linked (GlcNAc...) asparagine glycan is attached at Asn-131. N-linked (GlcNAc...) asparagine glycosylation is found at Asn-198, Asn-267, and Asn-307. Asp-315 is an active-site residue. N-linked (GlcNAc...) asparagine glycosylation occurs at Asn-345.

The protein belongs to the peptidase A1 family.

It is found in the secreted. It carries out the reaction Similar to pepsin, but also cleaves on either side of Asp and at Lys-|-Arg.. Inhibited by pepstatin and by diazoacetyl-D,L-norleucine methyl ester (DAN) in the presence of Cu(2+) ions. In terms of biological role, extracellular proteinase found in the pitcher fluid of carnivorous plants. Digest prey for nitrogen uptake. The chain is Aspartic proteinase nepenthesin-1 (nep1) from Nepenthes gracilis (Slender pitcher plant).